Reading from the N-terminus, the 319-residue chain is ATP-dependent 6-phosphofructokinase (319 aa).

An ATP-binding site is contributed by Gly11. An ADP-binding site is contributed by 21 to 25 (RAVTR). ATP is bound by residues 72–73 (RF) and 102–105 (GDGS). Asp103 serves as a coordination point for Mg(2+). 125 to 127 (SID) is a substrate binding site. The Proton acceptor role is filled by Asp127. Arg154 is an ADP binding site. Substrate contacts are provided by residues Arg162 and 169–171 (MGR). ADP-binding positions include 185–187 (GAD) and 213–215 (KKH). Residues Glu222, Arg243, and 249 to 252 (HMQR) contribute to the substrate site.

This sequence belongs to the phosphofructokinase type A (PFKA) family. ATP-dependent PFK group I subfamily. Prokaryotic clade 'B1' sub-subfamily. In terms of assembly, homotetramer. Mg(2+) serves as cofactor.

Its subcellular location is the cytoplasm. The catalysed reaction is beta-D-fructose 6-phosphate + ATP = beta-D-fructose 1,6-bisphosphate + ADP + H(+). It functions in the pathway carbohydrate degradation; glycolysis; D-glyceraldehyde 3-phosphate and glycerone phosphate from D-glucose: step 3/4. Allosterically activated by ADP and other diphosphonucleosides, and allosterically inhibited by phosphoenolpyruvate. Catalyzes the phosphorylation of D-fructose 6-phosphate to fructose 1,6-bisphosphate by ATP, the first committing step of glycolysis. The chain is ATP-dependent 6-phosphofructokinase from Lactobacillus gasseri (strain ATCC 33323 / DSM 20243 / BCRC 14619 / CIP 102991 / JCM 1131 / KCTC 3163 / NCIMB 11718 / NCTC 13722 / AM63).